Consider the following 307-residue polypeptide: Holliday junction branch migration complex subunit RuvB (307 aa).

The tract at residues methionine 1 to tyrosine 167 is large ATPase domain (RuvB-L). The ATP site is built by isoleucine 5, glycine 48, lysine 51, threonine 52, threonine 53, arginine 157, tyrosine 167, and arginine 204. Residue threonine 52 coordinates Mg(2+). The tract at residues serine 168–methionine 233 is small ATPAse domain (RuvB-S). A head domain (RuvB-H) region spans residues lysine 236–phenylalanine 307. The DNA site is built by arginine 270, lysine 289, and arginine 294.

It belongs to the RuvB family. In terms of assembly, homohexamer. Forms an RuvA(8)-RuvB(12)-Holliday junction (HJ) complex. HJ DNA is sandwiched between 2 RuvA tetramers; dsDNA enters through RuvA and exits via RuvB. An RuvB hexamer assembles on each DNA strand where it exits the tetramer. Each RuvB hexamer is contacted by two RuvA subunits (via domain III) on 2 adjacent RuvB subunits; this complex drives branch migration. In the full resolvosome a probable DNA-RuvA(4)-RuvB(12)-RuvC(2) complex forms which resolves the HJ.

Its subcellular location is the cytoplasm. It catalyses the reaction ATP + H2O = ADP + phosphate + H(+). In terms of biological role, the RuvA-RuvB-RuvC complex processes Holliday junction (HJ) DNA during genetic recombination and DNA repair, while the RuvA-RuvB complex plays an important role in the rescue of blocked DNA replication forks via replication fork reversal (RFR). RuvA specifically binds to HJ cruciform DNA, conferring on it an open structure. The RuvB hexamer acts as an ATP-dependent pump, pulling dsDNA into and through the RuvAB complex. RuvB forms 2 homohexamers on either side of HJ DNA bound by 1 or 2 RuvA tetramers; 4 subunits per hexamer contact DNA at a time. Coordinated motions by a converter formed by DNA-disengaged RuvB subunits stimulates ATP hydrolysis and nucleotide exchange. Immobilization of the converter enables RuvB to convert the ATP-contained energy into a lever motion, pulling 2 nucleotides of DNA out of the RuvA tetramer per ATP hydrolyzed, thus driving DNA branch migration. The RuvB motors rotate together with the DNA substrate, which together with the progressing nucleotide cycle form the mechanistic basis for DNA recombination by continuous HJ branch migration. Branch migration allows RuvC to scan DNA until it finds its consensus sequence, where it cleaves and resolves cruciform DNA. The polypeptide is Holliday junction branch migration complex subunit RuvB (Mycoplasma genitalium (strain ATCC 33530 / DSM 19775 / NCTC 10195 / G37) (Mycoplasmoides genitalium)).